Reading from the N-terminus, the 454-residue chain is tRNA modification GTPase MnmE (454 aa).

Arginine 23, glutamate 80, and lysine 120 together coordinate (6S)-5-formyl-5,6,7,8-tetrahydrofolate. The 162-residue stretch at 216-377 (GMKVVIAGRP…LRNHLKQSMG (162 aa)) folds into the TrmE-type G domain. K(+) is bound at residue asparagine 226. GTP-binding positions include 226 to 231 (NAGKSS), 245 to 251 (TDIAGTT), 270 to 273 (DTAG), 335 to 338 (NKAD), and 358 to 360 (SAR). Serine 230 is a Mg(2+) binding site. K(+) is bound by residues threonine 245, isoleucine 247, and threonine 250. A Mg(2+)-binding site is contributed by threonine 251. Lysine 454 is a (6S)-5-formyl-5,6,7,8-tetrahydrofolate binding site.

The protein belongs to the TRAFAC class TrmE-Era-EngA-EngB-Septin-like GTPase superfamily. TrmE GTPase family. As to quaternary structure, homodimer. Heterotetramer of two MnmE and two MnmG subunits. Requires K(+) as cofactor.

It is found in the cytoplasm. Its function is as follows. Exhibits a very high intrinsic GTPase hydrolysis rate. Involved in the addition of a carboxymethylaminomethyl (cmnm) group at the wobble position (U34) of certain tRNAs, forming tRNA-cmnm(5)s(2)U34. This Klebsiella pneumoniae (strain 342) protein is tRNA modification GTPase MnmE.